Reading from the N-terminus, the 1158-residue chain is Rho1 guanine nucleotide exchange factor 2 (1158 aa).

The disordered stretch occupies residues arginine 42 to glycine 141. A compositionally biased stretch (polar residues) spans glycine 45 to asparagine 63. Low complexity predominate over residues phenylalanine 68 to leucine 81. The span at lysine 97–aspartate 108 shows a compositional bias: polar residues. Residues serine 132 to glycine 141 show a composition bias toward low complexity. The region spanning lysine 447 to glutamate 634 is the DH domain. Positions leucine 670–isoleucine 805 constitute a PH domain. Residues serine 746 and serine 747 each carry the phosphoserine modification. One can recognise a CNH domain in the interval glycine 825–isoleucine 1120.

The protein localises to the cytoplasm. In terms of biological role, stimulates the exchange of Rho1 and Rho5 GDP-bound form into GTP-bound form. Controls septum formation, cell wall synthesis and localization of F-actin patches. The sequence is that of Rho1 guanine nucleotide exchange factor 2 (rgf2) from Schizosaccharomyces pombe (strain 972 / ATCC 24843) (Fission yeast).